Reading from the N-terminus, the 122-residue chain is Large ribosomal subunit protein uL14 (122 aa).

Belongs to the universal ribosomal protein uL14 family. Part of the 50S ribosomal subunit. Forms a cluster with proteins L3 and L19. In the 70S ribosome, L14 and L19 interact and together make contacts with the 16S rRNA in bridges B5 and B8.

Binds to 23S rRNA. Forms part of two intersubunit bridges in the 70S ribosome. This is Large ribosomal subunit protein uL14 from Teredinibacter turnerae (strain ATCC 39867 / T7901).